The chain runs to 451 residues: Tubulin alpha chain (451 aa).

Position 11 (glutamine 11) interacts with GTP. At lysine 40 the chain carries N6-acetyllysine. Residues glutamate 71, glycine 144, threonine 145, threonine 179, asparagine 206, and asparagine 228 each contribute to the GTP site. Residue glutamate 71 coordinates Mg(2+). Glutamate 254 is an active-site residue.

This sequence belongs to the tubulin family. As to quaternary structure, dimer of alpha and beta chains. A typical microtubule is a hollow water-filled tube with an outer diameter of 25 nm and an inner diameter of 15 nM. Alpha-beta heterodimers associate head-to-tail to form protofilaments running lengthwise along the microtubule wall with the beta-tubulin subunit facing the microtubule plus end conferring a structural polarity. Microtubules usually have 13 protofilaments but different protofilament numbers can be found in some organisms and specialized cells. It depends on Mg(2+) as a cofactor. Post-translationally, undergoes a tyrosination/detyrosination cycle, the cyclic removal and re-addition of a C-terminal tyrosine residue by the enzymes tubulin tyrosine carboxypeptidase (TTCP) and tubulin tyrosine ligase (TTL), respectively. Acetylation of alpha chains at Lys-40 stabilizes microtubules and affects affinity and processivity of microtubule motors. This modification has a role in multiple cellular functions, ranging from cell motility, cell cycle progression or cell differentiation to intracellular trafficking and signaling.

Its subcellular location is the cytoplasm. It localises to the cytoskeleton. The enzyme catalyses GTP + H2O = GDP + phosphate + H(+). Its function is as follows. Tubulin is the major constituent of microtubules, a cylinder consisting of laterally associated linear protofilaments composed of alpha- and beta-tubulin heterodimers. Microtubules grow by the addition of GTP-tubulin dimers to the microtubule end, where a stabilizing cap forms. Below the cap, tubulin dimers are in GDP-bound state, owing to GTPase activity of alpha-tubulin. This Trypanosoma cruzi protein is Tubulin alpha chain.